The following is a 291-amino-acid chain: MEKLLERVNHILEALPYITKYSGKTVVIKYGGAAMAKADLKESFAKDIVLLKYVGIHPVIVHGGGPEINRLLDSLKIPTEFIHGHRVTDTQTMEVVEMVLTGKVNKQIVSMINSQGGKAVGISGKDGNLAKAVKAPIEIELEGKEKQLFDVGLVGRIESINPEILHNLQKEGFIPVISPVAESVEGDSLNINADTFAGEIAGALEAEKLILLTDTEGILIDGKLATGLSRGKMKEYIRKGEISGGMIPKVECCLAAIDQGVNRTHIIDGRVSHSILIEIFTNQGIGSLIES.

Substrate contacts are provided by residues 64–65 (GG), Arg86, and Asn190.

The protein belongs to the acetylglutamate kinase family. ArgB subfamily.

It is found in the cytoplasm. It catalyses the reaction N-acetyl-L-glutamate + ATP = N-acetyl-L-glutamyl 5-phosphate + ADP. It functions in the pathway amino-acid biosynthesis; L-arginine biosynthesis; N(2)-acetyl-L-ornithine from L-glutamate: step 2/4. Catalyzes the ATP-dependent phosphorylation of N-acetyl-L-glutamate. This Leptospira borgpetersenii serovar Hardjo-bovis (strain L550) protein is Acetylglutamate kinase.